The following is an 804-amino-acid chain: Cell surface sensor MSB2 (804 aa).

An N-terminal signal peptide occupies residues 1–20; the sequence is MHNFSKLAVAFVAAASFASA. Topologically, residues 21-694 are extracellular; that stretch reads EPETKAKVER…TNQSATQRGT (674 aa). An N-linked (GlcNAc...) asparagine glycan is attached at asparagine 45. Low complexity-rich tracts occupy residues 46-58 and 69-80; these read TTTP…SSTS and SSFSSSASSSSA. Disordered stretches follow at residues 46 to 90 and 105 to 220; these read TTTP…RQPT and TDST…ATSN. The tract at residues 46-475 is serine/threonine rich region (STR); the sequence is TTTPASEASS…SVAPTSATSS (430 aa). Polar residues-rich tracts occupy residues 81 to 90 and 109 to 126; these read QELTASRQPT and PFSQ…SATG. Low complexity-rich tracts occupy residues 128–143 and 150–169; these read VTPI…PSTA and SALT…SVTS. An N-linked (GlcNAc...) asparagine glycan is attached at asparagine 157. Polar residues predominate over residues 170-188; sequence PGSTSGPAGTPESSSASDF. Low complexity predominate over residues 189 to 202; sequence TSAVATSRASTATS. N-linked (GlcNAc...) asparagine glycosylation is found at asparagine 298, asparagine 308, asparagine 357, and asparagine 393. Over residues 345–394 the composition is skewed to polar residues; the sequence is VQTLPPVSTPTANGTVTSPPVDSQTTVLPTTTPGLSSDTIVTSPGVTANS. The disordered stretch occupies residues 345 to 516; the sequence is VQTLPPVSTP…APTVLPSDLP (172 aa). 2 stretches are compositionally biased toward low complexity: residues 395–407 and 427–476; these read TQVP…TIPT and NNTV…TSSA. N-linked (GlcNAc...) asparagine glycosylation is found at asparagine 427 and asparagine 433. The HKR11-MSB2 homology domain (HMH) stretch occupies residues 482 to 641; sequence WLPTTIIVQA…NGMLAHNLTM (160 aa). The span at 493–508 shows a compositional bias: polar residues; it reads LPSTTGSSTNAPSSAP. 5 N-linked (GlcNAc...) asparagine glycosylation sites follow: asparagine 629, asparagine 638, asparagine 669, asparagine 683, and asparagine 686. A disordered region spans residues 658–689; the sequence is KPAGAGSGTGGNGSNGPNDVFNNDNNSTNQSA. Residues 660–671 show a composition bias toward gly residues; the sequence is AGAGSGTGGNGS. The span at 672-686 shows a compositional bias: low complexity; the sequence is NGPNDVFNNDNNSTN. Residues 695–715 traverse the membrane as a helical segment; the sequence is VAGIAFGAVSLAAAYGAAMFI. Residues 716 to 804 lie on the Cytoplasmic side of the membrane; it reads VARRYKKKRQ…VAQENSLGWN (89 aa). Disordered stretches follow at residues 724-748 and 762-804; these read RQAH…PALM and GVMG…LGWN. Polar residues predominate over residues 731–744; the sequence is SSVATPSEMRQSGS. The span at 774 to 787 shows a compositional bias: low complexity; sequence GSNGSGRSAGNSAR.

The protein belongs to the HKR1/MSB2 family.

Its subcellular location is the cell membrane. The protein localises to the vacuole membrane. In terms of biological role, MSB2 and SHO1 have overlapping functions in recognizing various surface signals for MAPK PMK1 activation and appressorium formation. While MSB2 is critical for sensing surface hydrophobicity and cutin monomers, SHO1 may play a more important role in recognizing rice leaf waxes. The chain is Cell surface sensor MSB2 from Pyricularia oryzae (strain 70-15 / ATCC MYA-4617 / FGSC 8958) (Rice blast fungus).